The sequence spans 875 residues: Leucine--tRNA ligase (875 aa).

Positions 43–53 (PYPSGRIHMGH) match the 'HIGH' region motif. The 'KMSKS' region motif lies at 633-637 (KMSKS). Residue Lys636 coordinates ATP.

This sequence belongs to the class-I aminoacyl-tRNA synthetase family.

It is found in the cytoplasm. It carries out the reaction tRNA(Leu) + L-leucine + ATP = L-leucyl-tRNA(Leu) + AMP + diphosphate. This Bartonella bacilliformis (strain ATCC 35685 / KC583 / Herrer 020/F12,63) protein is Leucine--tRNA ligase.